A 336-amino-acid polypeptide reads, in one-letter code: D-altritol 5-dehydrogenase (336 aa).

Residues Cys37, His59, Glu60, Cys89, Cys92, Cys95, and Cys103 each coordinate Zn(2+).

It belongs to the zinc-containing alcohol dehydrogenase family. The cofactor is Zn(2+).

The catalysed reaction is D-altritol + NAD(+) = keto-D-tagatose + NADH + H(+). The protein operates within carbohydrate metabolism. In terms of biological role, involved in D-altritol catabolism. Catalyzes the oxidation of D-altritol to D-tagatose. This chain is D-altritol 5-dehydrogenase, found in Agrobacterium fabrum (strain C58 / ATCC 33970) (Agrobacterium tumefaciens (strain C58)).